A 225-amino-acid polypeptide reads, in one-letter code: Enolase-phosphatase E1 (225 aa).

It belongs to the HAD-like hydrolase superfamily. MasA/MtnC family. Monomer. The cofactor is Mg(2+).

It catalyses the reaction 5-methylsulfanyl-2,3-dioxopentyl phosphate + H2O = 1,2-dihydroxy-5-(methylsulfanyl)pent-1-en-3-one + phosphate. The protein operates within amino-acid biosynthesis; L-methionine biosynthesis via salvage pathway; L-methionine from S-methyl-5-thio-alpha-D-ribose 1-phosphate: step 3/6. It functions in the pathway amino-acid biosynthesis; L-methionine biosynthesis via salvage pathway; L-methionine from S-methyl-5-thio-alpha-D-ribose 1-phosphate: step 4/6. In terms of biological role, bifunctional enzyme that catalyzes the enolization of 2,3-diketo-5-methylthiopentyl-1-phosphate (DK-MTP-1-P) into the intermediate 2-hydroxy-3-keto-5-methylthiopentenyl-1-phosphate (HK-MTPenyl-1-P), which is then dephosphorylated to form the acireductone 1,2-dihydroxy-3-keto-5-methylthiopentene (DHK-MTPene). This Shewanella loihica (strain ATCC BAA-1088 / PV-4) protein is Enolase-phosphatase E1.